Here is a 41-residue protein sequence, read N- to C-terminus: Minor histocompatibility protein HB-1 (41 aa).

Positions 9–17 (EEKRGSLHV) are loss of recognition by cytotoxic T lymphocyte (CTL).

In terms of assembly, HB-1 forms a complex with MHC class I HLA-B44. In terms of tissue distribution, expressed in acute lymphoblastic leukemia B-cells and Epstein-Barr virus-transformed B-cells.

Precursor of the histocomplatibility antigen HB-1. More generally, minor histocomplatibility antigens (mHags) refer to immunogenic peptide which, when complexed with MHC, can generate an immune response after recognition by specific T-cells. The peptides are derived from polymorphic intracellular proteins, which are cleaved by normal pathways of antigen processing. The binding of these peptides to MHC class I or class II molecules and its expression on the cell surface can stimulate T-cell responses and thereby trigger graft rejection or graft-versus-host disease (GVHD) after hematopoietic stem cell transplantation from HLA-identical sibling donor. GVHD is a frequent complication after bone marrow transplantation (BMT), due to mismatch of minor histocomplatibility antigen in HLA-matched sibling marrow transplants. HB-1 is presented on the cell surface by MHC class I HLA-B44. This complex specifically elicits donor-cytotoxic T lymphocyte (CTL) reactivity in B-cell acute lymphoblastic leukemia (B-ALL) after treatment by HLA-identical allogenic bone marrow transplantation (BMT). It induces cell recognition and lysis by CTL. However, HB-1 restricted expression in B-ALL cells and not in normal tissues may allow a specific CTL reactivity against B-ALL without the risk of evoking graft-versus-host disease. The polypeptide is Minor histocompatibility protein HB-1 (HMHB1) (Homo sapiens (Human)).